The primary structure comprises 72 residues: Translation initiation factor IF-1 (72 aa).

An S1-like domain is found at 1–72 (MAKEDVIEVE…NRGRIIYRFK (72 aa)).

It belongs to the IF-1 family. Component of the 30S ribosomal translation pre-initiation complex which assembles on the 30S ribosome in the order IF-2 and IF-3, IF-1 and N-formylmethionyl-tRNA(fMet); mRNA recruitment can occur at any time during PIC assembly.

It is found in the cytoplasm. In terms of biological role, one of the essential components for the initiation of protein synthesis. Stabilizes the binding of IF-2 and IF-3 on the 30S subunit to which N-formylmethionyl-tRNA(fMet) subsequently binds. Helps modulate mRNA selection, yielding the 30S pre-initiation complex (PIC). Upon addition of the 50S ribosomal subunit IF-1, IF-2 and IF-3 are released leaving the mature 70S translation initiation complex. The polypeptide is Translation initiation factor IF-1 (Syntrophomonas wolfei subsp. wolfei (strain DSM 2245B / Goettingen)).